We begin with the raw amino-acid sequence, 426 residues long: Serine--tRNA ligase (426 aa).

T233–E235 lines the L-serine pocket. Position 264 to 266 (R264 to E266) interacts with ATP. Residue E287 coordinates L-serine. E351 to S354 contributes to the ATP binding site. S387 contacts L-serine.

This sequence belongs to the class-II aminoacyl-tRNA synthetase family. Type-1 seryl-tRNA synthetase subfamily. As to quaternary structure, homodimer. The tRNA molecule binds across the dimer.

The protein resides in the cytoplasm. It carries out the reaction tRNA(Ser) + L-serine + ATP = L-seryl-tRNA(Ser) + AMP + diphosphate + H(+). It catalyses the reaction tRNA(Sec) + L-serine + ATP = L-seryl-tRNA(Sec) + AMP + diphosphate + H(+). Its pathway is aminoacyl-tRNA biosynthesis; selenocysteinyl-tRNA(Sec) biosynthesis; L-seryl-tRNA(Sec) from L-serine and tRNA(Sec): step 1/1. In terms of biological role, catalyzes the attachment of serine to tRNA(Ser). Is also able to aminoacylate tRNA(Sec) with serine, to form the misacylated tRNA L-seryl-tRNA(Sec), which will be further converted into selenocysteinyl-tRNA(Sec). In Stutzerimonas stutzeri (strain A1501) (Pseudomonas stutzeri), this protein is Serine--tRNA ligase.